The primary structure comprises 495 residues: Glycerol kinase (495 aa).

Threonine 11 contacts ADP. Residues threonine 11, threonine 12, and serine 13 each coordinate ATP. Threonine 11 is a sn-glycerol 3-phosphate binding site. Arginine 15 is a binding site for ADP. Sn-glycerol 3-phosphate contacts are provided by arginine 81, glutamate 82, tyrosine 133, and aspartate 242. Glycerol is bound by residues arginine 81, glutamate 82, tyrosine 133, aspartate 242, and glutamine 243. ADP is bound by residues threonine 264 and glycine 307. ATP-binding residues include threonine 264, glycine 307, glutamine 311, and glycine 408. ADP is bound by residues glycine 408 and asparagine 412.

The protein belongs to the FGGY kinase family.

The catalysed reaction is glycerol + ATP = sn-glycerol 3-phosphate + ADP + H(+). The protein operates within polyol metabolism; glycerol degradation via glycerol kinase pathway; sn-glycerol 3-phosphate from glycerol: step 1/1. Its activity is regulated as follows. Inhibited by fructose 1,6-bisphosphate (FBP). In terms of biological role, key enzyme in the regulation of glycerol uptake and metabolism. Catalyzes the phosphorylation of glycerol to yield sn-glycerol 3-phosphate. This chain is Glycerol kinase, found in Alkalilimnicola ehrlichii (strain ATCC BAA-1101 / DSM 17681 / MLHE-1).